The primary structure comprises 560 residues: Dihydroxy-acid dehydratase (560 aa).

A [2Fe-2S] cluster-binding site is contributed by cysteine 52. Mg(2+) is bound at residue aspartate 84. Cysteine 125 contacts [2Fe-2S] cluster. Residues aspartate 126 and lysine 127 each coordinate Mg(2+). Lysine 127 bears the N6-carboxylysine mark. Cysteine 197 contributes to the [2Fe-2S] cluster binding site. Residue glutamate 448 participates in Mg(2+) binding. Residue serine 474 is the Proton acceptor of the active site.

This sequence belongs to the IlvD/Edd family. Homodimer. It depends on [2Fe-2S] cluster as a cofactor. Requires Mg(2+) as cofactor.

The catalysed reaction is (2R)-2,3-dihydroxy-3-methylbutanoate = 3-methyl-2-oxobutanoate + H2O. The enzyme catalyses (2R,3R)-2,3-dihydroxy-3-methylpentanoate = (S)-3-methyl-2-oxopentanoate + H2O. It participates in amino-acid biosynthesis; L-isoleucine biosynthesis; L-isoleucine from 2-oxobutanoate: step 3/4. The protein operates within amino-acid biosynthesis; L-valine biosynthesis; L-valine from pyruvate: step 3/4. Its function is as follows. Functions in the biosynthesis of branched-chain amino acids. Catalyzes the dehydration of (2R,3R)-2,3-dihydroxy-3-methylpentanoate (2,3-dihydroxy-3-methylvalerate) into 2-oxo-3-methylpentanoate (2-oxo-3-methylvalerate) and of (2R)-2,3-dihydroxy-3-methylbutanoate (2,3-dihydroxyisovalerate) into 2-oxo-3-methylbutanoate (2-oxoisovalerate), the penultimate precursor to L-isoleucine and L-valine, respectively. The sequence is that of Dihydroxy-acid dehydratase from Francisella tularensis subsp. tularensis (strain WY96-3418).